Reading from the N-terminus, the 117-residue chain is Minor capsid protein p17 (117 aa).

An N-linked (GlcNAc...) asparagine; by host glycan is attached at Asn-12. The helical transmembrane segment at 39–59 (AILLGILILLVIILIIVAIVY) threads the bilayer. Residues Asn-61 and Asn-97 are each glycosylated (N-linked (GlcNAc...) asparagine; by host).

This sequence belongs to the asfivirus minor capsid protein p17 family. Interacts with the minor capsid protein M1249L and with the hexon capsid protein p72 capsomers; these interactions form a rigid zipper structure that stabilizes the capsomers. Interacts with host STING1.

It localises to the virion membrane. Its subcellular location is the host endoplasmic reticulum membrane. It is found in the host Golgi apparatus membrane. In terms of biological role, together with the penton and the other minor capsid proteins (M1249L, p49), forms a complicated network immediately below the outer capsid shell, stabilizing the whole capsid. Three copies of p17 encircle each p72 capsomer in the inner capsid shell, anchoring p72 capsomers on the inner membrane. Required for the assembly of the capsid and icosahedral morphogenesis. Additionally, inhibits the host cGAS-STING pathway through its interaction with STING1 and subsequent interference of the recruitment of downstream components TBK1 and IKBKE. This chain is Minor capsid protein p17, found in African swine fever virus (strain Badajoz 1971 Vero-adapted) (Ba71V).